The following is an 83-amino-acid chain: Small ribosomal subunit protein bS18 (83 aa).

Belongs to the bacterial ribosomal protein bS18 family. In terms of assembly, part of the 30S ribosomal subunit. Forms a tight heterodimer with protein bS6.

Its function is as follows. Binds as a heterodimer with protein bS6 to the central domain of the 16S rRNA, where it helps stabilize the platform of the 30S subunit. In Methylobacterium sp. (strain 4-46), this protein is Small ribosomal subunit protein bS18.